We begin with the raw amino-acid sequence, 1732 residues long: Transient receptor potential cation channel subfamily M member 3 (1732 aa).

The Cytoplasmic segment spans residues 1-894 (MPGPWGTVYF…RKIYEFYNAP (894 aa)). 5 calmodulin-binding regions span residues 41-64 (WTIR…QKSW), 192-215 (NFEL…MTTG), 300-323 (TGKY…QKIN), 601-624 (RKRF…KLLG), and 793-816 (RKNS…LEFK). Residues 617–625 (PKALKLLGM) form a required for the inhibitory action of G-beta/gamma-subunits of heterotrimeric G-proteins region. Ser-796 contributes to the 1,2-dioctanoyl-sn-glycero-3-phospho-(1D-myo-inositol-4,5-bisphosphate) binding site. Positions 829 to 851 (EIHLQEKEPEEPEKPTKEKDEED) are disordered. Residues 831-847 (HLQEKEPEEPEKPTKEK) are compositionally biased toward basic and acidic residues. The chain crosses the membrane as a helical span at residues 895–918 (IVKFWFYTLAYIGYLMLFNYIVLV). The Extracellular segment spans residues 919 to 925 (KMERWPS). The helical transmembrane segment at 926–948 (TQEWIVISYIFTLGIEKMREILM) threads the bilayer. Topologically, residues 949-964 (SEPGKLLQKVKVWLQE) are cytoplasmic. Residues 965–985 (YWNVTDLIAILLFSVGMILRL) traverse the membrane as a helical segment. Residues 986–989 (QDQP) lie on the Extracellular side of the membrane. The chain crosses the membrane as a helical span at residues 990 to 1013 (FRSDGRVIYCVNIIYWYIRLLDIF). Residues 1014–1028 (GVNKYLGPYVMMIGK) lie on the Cytoplasmic side of the membrane. Positions 1017 and 1018 each coordinate 1,2-dioctanoyl-sn-glycero-3-phospho-(1D-myo-inositol-4,5-bisphosphate). Residues 1029–1056 (MMIDMMYFVIIMLVVLMSFGVARQAILF) traverse the membrane as a helical segment. The Extracellular segment spans residues 1057–1073 (PNEEPSWKLAKNIFYMP). An intramembrane region (pore-forming) is located at residues 1074–1101 (YWMIYGEVFADQIDPPCGQNETREDGKT). The Extracellular portion of the chain corresponds to 1102-1111 (IQLPPCKTGA). The chain crosses the membrane as a helical span at residues 1112 to 1137 (WIVPAIMACYLLVANILLVNLLIAVF). The Cytoplasmic segment spans residues 1138-1732 (NNTFFEVKSI…AFHSFESKHN (595 aa)). The interval 1610–1732 (EREAELSHPS…AFHSFESKHN (123 aa)) is disordered. 2 stretches are compositionally biased toward polar residues: residues 1635–1653 (PISS…NNIT) and 1690–1701 (NTASLRNPFQRS).

This sequence belongs to the transient receptor (TC 1.A.4) family. LTrpC subfamily. TRPM3 sub-subfamily. Homotetramer. Interacts with TRPM1; the interaction results in the formation of a heteromultimeric cation channel complex that are functionally different from the homomeric channels.

It is found in the cell membrane. The enzyme catalyses Ca(2+)(in) = Ca(2+)(out). It catalyses the reaction Mn(2+)(in) = Mn(2+)(out). The catalysed reaction is Zn(2+)(in) = Zn(2+)(out). It carries out the reaction Mg(2+)(in) = Mg(2+)(out). The enzyme catalyses Na(+)(in) = Na(+)(out). With respect to regulation, activated by the neurosteroid pregnelonone sulfate (PregS). PregS activates the channel by shifting its current-voltage activation curve toward more negative membrane potentials and also potentiates temperature-induced activation. Activated by heat. Intracellular Ca(2+) inhibits TRPM3 probably via interaction with Ca(2+)/calmodulin. Intracellular Mg(2+) inhibits TRPM3 activity. Both intracellular and extracellular protons block TRPM3 through propable binding sites in the pore region. Positively regulated by phosphoinositide phosphoinositol 4,5-biphosphate (PI(4,5)P2). Strongly inhibited by activation of G(i)-coupled receptors via direct binding with G-beta/gamma-subunits of heterotrimeric G-proteins. Its activity is regulated as follows. Insensitive to pregnenolone sulfate (PregS) or heat. Not inhibited by G-beta/gamma-subunits of heterotrimeric G-proteins. In terms of biological role, constitutively active, non-selective divalent cation-conducting channel that is permeable to Ca(2+), Mn(2+), and Mg(2+), with a high permeability for Ca(2+). However, can be enhanced by increasing temperature and by ligands, including the endogenous neurosteroid pregnenolone sulfate and sphingosine-1 and suppressed by intracellular Mg(2+). Implicated in a variety of cellular processes, including insulin/peptide secretion, vascular constriction and dilation, noxious heat sensing, inflammatory and spontaneous pain sensitivity. In neurons of the dorsal root ganglia, functions as thermosensitive channel for the detection of noxious heat and spontaneous pain. Suggested to function as an ionotropic steroid receptor in beta-cell, indeed pregnenolone sulfate leads to Ca(2+) influx and enhanced insulin secretion. Mediates Zn(2+) uptake into the lumen of pancreatic beta cell secretory granules, thereby regulating insulin secretion. Forms heteromultimeric ion channels with TRPM1 which are permeable for Ca(2+) and Zn(2+) ions. Exists as multiple splice variants which differ significantly in their biophysical properties. Its function is as follows. Displays strongly reduced permeability for divalent cations and high selectivity toward monovalent cations. Functionally, no channel activity. The chain is Transient receptor potential cation channel subfamily M member 3 from Mus musculus (Mouse).